The following is a 74-amino-acid chain: Omega-filistatoxin-Kh1a (74 aa).

Contains 6 disulfide bonds. In terms of tissue distribution, expressed by the venom gland.

The protein localises to the secreted. Potently blocks vertebrate calcium channels Cav1 and Cav2. Is the most active on Cav2.2/CACNA1B (from HEK) (IC(50)=2.3 nM), followed by Cav2.1/CACNA1A (IC(50)=4.3 nM), Cav2.2/CACNA1B (from oocyte) (IC(50)=14.4 nM), Cav1.2/CACNA1C (IC(50)=26.8 nM), and Cav2.3/CACNA1E (IC(50)=96.4 nM). The chain is Omega-filistatoxin-Kh1a from Kukulcania hibernalis (Southern house spider).